A 493-amino-acid chain; its full sequence is Glutamyl-tRNA(Gln) amidotransferase subunit A (493 aa).

Catalysis depends on charge relay system residues Lys81 and Ser156. Ser180 serves as the catalytic Acyl-ester intermediate.

The protein belongs to the amidase family. GatA subfamily. Heterotrimer of A, B and C subunits.

It catalyses the reaction L-glutamyl-tRNA(Gln) + L-glutamine + ATP + H2O = L-glutaminyl-tRNA(Gln) + L-glutamate + ADP + phosphate + H(+). Its function is as follows. Allows the formation of correctly charged Gln-tRNA(Gln) through the transamidation of misacylated Glu-tRNA(Gln) in organisms which lack glutaminyl-tRNA synthetase. The reaction takes place in the presence of glutamine and ATP through an activated gamma-phospho-Glu-tRNA(Gln). The protein is Glutamyl-tRNA(Gln) amidotransferase subunit A of Mycobacterium ulcerans (strain Agy99).